We begin with the raw amino-acid sequence, 191 residues long: Fe/S biogenesis protein NfuA (191 aa).

2 residues coordinate [4Fe-4S] cluster: Cys-149 and Cys-152.

Belongs to the NfuA family. As to quaternary structure, homodimer. [4Fe-4S] cluster is required as a cofactor.

In terms of biological role, involved in iron-sulfur cluster biogenesis. Binds a 4Fe-4S cluster, can transfer this cluster to apoproteins, and thereby intervenes in the maturation of Fe/S proteins. Could also act as a scaffold/chaperone for damaged Fe/S proteins. The sequence is that of Fe/S biogenesis protein NfuA from Escherichia coli O7:K1 (strain IAI39 / ExPEC).